A 493-amino-acid polypeptide reads, in one-letter code: Leucine-rich repeat-containing protein 14 (493 aa).

Residues 111 to 146 (KHALRVLDMTGLLDDGVEQDPETMSMWDCTAAVART) form an LRR 1; degenerate repeat. One copy of the LRR 2; degenerate repeat lies at 194 to 218 (RLCCRDLRAEDLPMRNTVALLQLLD). One copy of the LRR 3; degenerate repeat lies at 219 to 246 (AGCLRRIDLRFNNLGLRGLSVIIPHVAR). Residues 247 to 282 (FQHLASLRLHYVHGDSRQPSVDGEDNFRYFLAQMGR) form an LRR 4; degenerate repeat. LRR repeat units follow at residues 283-307 (FMCL…LSTL), 308-339 (QRPL…AHLK), 340-360 (KLDL…QGLL), 364-391 (ATTL…TLTR), and 392-416 (CASL…LLRD).

Belongs to the PRAME family. LRRC14 subfamily. As to quaternary structure, interacts with IKBKB; disrupts IKBKB-IKBKG interaction preventing I-kappa-B-kinase (IKK) core complex formation and leading to a decrease of IKBKB phosphorylation and NF-kappaB activation. Interacts with CHUK.

Its subcellular location is the cytoplasm. Negatively regulates Toll-like receptor-mediated NF-kappa-B signaling by disrupting IKK core complex formation through interaction with IKBKB. This chain is Leucine-rich repeat-containing protein 14, found in Mus musculus (Mouse).